Reading from the N-terminus, the 308-residue chain is F420-non-reducing hydrogenase subunit G (308 aa).

The protein belongs to the [NiFe]/[NiFeSe] hydrogenase small subunit family. The F420-non-reducing hydrogenase is composed of three subunits; MvhA, MvhD and MvhG. It forms a complex with the heterodisulfide reductase (hdr).

Part of a complex that provides reducing equivalents for heterodisulfide reductase. In Methanothermobacter marburgensis (strain ATCC BAA-927 / DSM 2133 / JCM 14651 / NBRC 100331 / OCM 82 / Marburg) (Methanobacterium thermoautotrophicum), this protein is F420-non-reducing hydrogenase subunit G (mvhG).